Reading from the N-terminus, the 235-residue chain is Sugar fermentation stimulation protein homolog (235 aa).

This sequence belongs to the SfsA family.

The protein is Sugar fermentation stimulation protein homolog of Pseudomonas aeruginosa (strain ATCC 15692 / DSM 22644 / CIP 104116 / JCM 14847 / LMG 12228 / 1C / PRS 101 / PAO1).